A 309-amino-acid chain; its full sequence is Methionyl-tRNA formyltransferase (309 aa).

110–113 lines the (6S)-5,6,7,8-tetrahydrofolate pocket; the sequence is SLLP.

This sequence belongs to the Fmt family.

It carries out the reaction L-methionyl-tRNA(fMet) + (6R)-10-formyltetrahydrofolate = N-formyl-L-methionyl-tRNA(fMet) + (6S)-5,6,7,8-tetrahydrofolate + H(+). In terms of biological role, attaches a formyl group to the free amino group of methionyl-tRNA(fMet). The formyl group appears to play a dual role in the initiator identity of N-formylmethionyl-tRNA by promoting its recognition by IF2 and preventing the misappropriation of this tRNA by the elongation apparatus. The chain is Methionyl-tRNA formyltransferase from Caldanaerobacter subterraneus subsp. tengcongensis (strain DSM 15242 / JCM 11007 / NBRC 100824 / MB4) (Thermoanaerobacter tengcongensis).